Consider the following 297-residue polypeptide: Dipicolinate synthase subunit A (297 aa).

NADP(+)-binding positions include 164 to 165 (RT), arginine 185, threonine 203, 242 to 244 (LAS), and 264 to 267 (APGL).

As to quaternary structure, dipicolinate synthase likely consists of DpaA and DpaB, since both proteins are required for DPA synthesis.

It carries out the reaction (S)-2,3-dihydrodipicolinate + NADP(+) = dipicolinate + NADPH + H(+). Its function is as follows. Together with DpaB, catalyzes the conversion of dihydrodipicolinate to dipicolinate (DPA), which constitutes up to 10% of the dry weight of the spore. In Bacillus subtilis (strain 168), this protein is Dipicolinate synthase subunit A (dpaA).